The chain runs to 451 residues: Phosphoglucosamine mutase (451 aa).

Catalysis depends on serine 107, which acts as the Phosphoserine intermediate. Residues serine 107, aspartate 246, aspartate 248, and aspartate 250 each coordinate Mg(2+). Position 107 is a phosphoserine (serine 107).

This sequence belongs to the phosphohexose mutase family. Mg(2+) serves as cofactor. Activated by phosphorylation.

The catalysed reaction is alpha-D-glucosamine 1-phosphate = D-glucosamine 6-phosphate. Its function is as follows. Catalyzes the conversion of glucosamine-6-phosphate to glucosamine-1-phosphate. This chain is Phosphoglucosamine mutase, found in Burkholderia cenocepacia (strain HI2424).